The primary structure comprises 128 residues: Large ribosomal subunit protein bL12 (128 aa).

The protein belongs to the bacterial ribosomal protein bL12 family. As to quaternary structure, homodimer. Part of the ribosomal stalk of the 50S ribosomal subunit. Forms a multimeric L10(L12)X complex, where L10 forms an elongated spine to which 2 to 4 L12 dimers bind in a sequential fashion. Binds GTP-bound translation factors.

Functionally, forms part of the ribosomal stalk which helps the ribosome interact with GTP-bound translation factors. Is thus essential for accurate translation. The protein is Large ribosomal subunit protein bL12 of Rubrobacter xylanophilus (strain DSM 9941 / JCM 11954 / NBRC 16129 / PRD-1).